A 187-amino-acid polypeptide reads, in one-letter code: Pyridoxal 5'-phosphate synthase subunit PdxT (187 aa).

Residue 47-49 coordinates L-glutamine; sequence GES. Cys76 (nucleophile) is an active-site residue. L-glutamine is bound by residues Arg102 and 128 to 129; that span reads IR. Catalysis depends on charge relay system residues His165 and Glu167.

Belongs to the glutaminase PdxT/SNO family. As to quaternary structure, in the presence of PdxS, forms a dodecamer of heterodimers. Only shows activity in the heterodimer.

The enzyme catalyses aldehydo-D-ribose 5-phosphate + D-glyceraldehyde 3-phosphate + L-glutamine = pyridoxal 5'-phosphate + L-glutamate + phosphate + 3 H2O + H(+). It catalyses the reaction L-glutamine + H2O = L-glutamate + NH4(+). The protein operates within cofactor biosynthesis; pyridoxal 5'-phosphate biosynthesis. Catalyzes the hydrolysis of glutamine to glutamate and ammonia as part of the biosynthesis of pyridoxal 5'-phosphate. The resulting ammonia molecule is channeled to the active site of PdxS. This is Pyridoxal 5'-phosphate synthase subunit PdxT from Methanococcus maripaludis (strain C7 / ATCC BAA-1331).